Here is a 475-residue protein sequence, read N- to C-terminus: Ribulose bisphosphate carboxylase large chain (475 aa).

Positions 1-2 (MS) are excised as a propeptide. Pro3 carries the N-acetylproline modification. Lys14 bears the N6,N6,N6-trimethyllysine mark. Substrate is bound by residues Asn123 and Thr173. Lys175 (proton acceptor) is an active-site residue. Lys177 is a binding site for substrate. The Mg(2+) site is built by Lys201, Asp203, and Glu204. N6-carboxylysine is present on Lys201. His294 functions as the Proton acceptor in the catalytic mechanism. Arg295, His327, and Ser379 together coordinate substrate.

It belongs to the RuBisCO large chain family. Type I subfamily. As to quaternary structure, heterohexadecamer of 8 large chains and 8 small chains; disulfide-linked. The disulfide link is formed within the large subunit homodimers. Requires Mg(2+) as cofactor. In terms of processing, the disulfide bond which can form in the large chain dimeric partners within the hexadecamer appears to be associated with oxidative stress and protein turnover.

The protein resides in the plastid. It localises to the chloroplast. The enzyme catalyses 2 (2R)-3-phosphoglycerate + 2 H(+) = D-ribulose 1,5-bisphosphate + CO2 + H2O. The catalysed reaction is D-ribulose 1,5-bisphosphate + O2 = 2-phosphoglycolate + (2R)-3-phosphoglycerate + 2 H(+). Its function is as follows. RuBisCO catalyzes two reactions: the carboxylation of D-ribulose 1,5-bisphosphate, the primary event in carbon dioxide fixation, as well as the oxidative fragmentation of the pentose substrate in the photorespiration process. Both reactions occur simultaneously and in competition at the same active site. The sequence is that of Ribulose bisphosphate carboxylase large chain from Angiopteris evecta (Mule's foot fern).